We begin with the raw amino-acid sequence, 280 residues long: Mesaconyl-C(4)-CoA hydratase (280 aa).

This sequence belongs to the HTD2 family. As to quaternary structure, homodimer.

The catalysed reaction is (3S)-citramalyl-CoA = 3-methylfumaryl-CoA + H2O. Its activity is regulated as follows. Inhibited by 3-methylfumaryl-CoA concentrations above 0.3 mM. Involved in the glyoxylate assimilation cycle used to regenerate acetyl-CoA and produce pyruvate as universal precursor for biosynthesis. Catalyzes the hydration of 3-methylfumaryl-CoA (mesaconyl-C4-CoA) to (3S)-citramalyl-CoA. This is Mesaconyl-C(4)-CoA hydratase (meh) from Chloroflexus aurantiacus (strain ATCC 29366 / DSM 635 / J-10-fl).